A 386-amino-acid chain; its full sequence is ORC1-type DNA replication protein 3 (386 aa).

ATP contacts are provided by residues 65–69 (TGKTF) and tyrosine 206.

This sequence belongs to the CDC6/cdc18 family.

Functionally, involved in regulation of DNA replication. This Sulfurisphaera tokodaii (strain DSM 16993 / JCM 10545 / NBRC 100140 / 7) (Sulfolobus tokodaii) protein is ORC1-type DNA replication protein 3 (cdc6-3).